Consider the following 182-residue polypeptide: Early nodulin-like protein 14 (182 aa).

Positions 1 to 28 (MFLSASMASSSLHVAIFSLIFLFSLAAA) are cleaved as a signal peptide. Residues 29–133 (NEVTVGGKSG…GQKLSLVVIS (105 aa)) enclose the Phytocyanin domain. C87 and C121 are joined by a disulfide. N-linked (GlcNAc...) asparagine glycosylation is found at N88 and N95. S160 carries GPI-anchor amidated serine lipidation. The propeptide at 161-182 (GSVRLGGCYVVLGLVLGLCAWF) is removed in mature form.

It belongs to the early nodulin-like (ENODL) family. In terms of assembly, interacts strongly and specifically with the extracellular domain of FERONIA at the synergid cell surface. Mostly expressed in seedlings and flowers, and, to a lower extent, in roots, stems and seeds, but barely in leaves.

It localises to the cell membrane. Functionally, may act as a carbohydrate transporter. Required, together with ENODL11, ENODL12, ENODL13, ENODL14 and ENODL15, for male-female communication and pollen tube reception and burst at the synergid cell surface of the female gametophyte. The chain is Early nodulin-like protein 14 from Arabidopsis thaliana (Mouse-ear cress).